Reading from the N-terminus, the 632-residue chain is Chaperone protein DnaK (632 aa).

Thr-198 is modified (phosphothreonine; by autocatalysis). The tract at residues 599 to 632 (YKKAGASQQGAGSTTQSKKEEDVIEAEVEDKDNK) is disordered. Residues 604 to 614 (ASQQGAGSTTQ) are compositionally biased toward polar residues. The span at 620–632 (DVIEAEVEDKDNK) shows a compositional bias: acidic residues.

Belongs to the heat shock protein 70 family.

Its function is as follows. Acts as a chaperone. This chain is Chaperone protein DnaK, found in Thermodesulfovibrio yellowstonii (strain ATCC 51303 / DSM 11347 / YP87).